Consider the following 276-residue polypeptide: Elongation factor Ts (276 aa).

An involved in Mg(2+) ion dislocation from EF-Tu region spans residues 80 to 83 (TDFV).

It belongs to the EF-Ts family.

It is found in the cytoplasm. Its function is as follows. Associates with the EF-Tu.GDP complex and induces the exchange of GDP to GTP. It remains bound to the aminoacyl-tRNA.EF-Tu.GTP complex up to the GTP hydrolysis stage on the ribosome. The polypeptide is Elongation factor Ts (Acidothermus cellulolyticus (strain ATCC 43068 / DSM 8971 / 11B)).